A 212-amino-acid polypeptide reads, in one-letter code: Transcriptional repressor CcpN (212 aa).

Residues 6 to 70 (LNKRQEHILQ…FYTGKTGTQL (65 aa)) form the HTH deoR-type domain. Positions 23–42 (ITGEHIAEKLNLTRATLRPD) form a DNA-binding region, H-T-H motif. CBS domains lie at 83-139 (FQSI…QQEL) and 148-211 (MTRM…ENEI).

Its function is as follows. Transcription repressor that binds to the promoter of gapB and pckA genes, preventing their expression. Acts as a regulator for catabolite repression of gluconeogenic genes. The chain is Transcriptional repressor CcpN (ccpN) from Bacillus subtilis (strain 168).